Here is a 280-residue protein sequence, read N- to C-terminus: ATP synthase subunit a (280 aa).

7 consecutive transmembrane segments (helical) span residues 45-65, 105-125, 126-146, 159-179, 190-210, 223-243, and 250-270; these read AINV…LFLF, LVAP…LMDL, LPVD…LKVV, LSIF…GGFF, FLFP…PISL, MIFI…LFGG, and AVFH…LTIV.

Belongs to the ATPase A chain family. F-type ATPases have 2 components, CF(1) - the catalytic core - and CF(0) - the membrane proton channel. CF(1) has five subunits: alpha(3), beta(3), gamma(1), delta(1), epsilon(1). CF(0) has three main subunits: a(1), b(2) and c(9-12). The alpha and beta chains form an alternating ring which encloses part of the gamma chain. CF(1) is attached to CF(0) by a central stalk formed by the gamma and epsilon chains, while a peripheral stalk is formed by the delta and b chains.

It localises to the cell inner membrane. Functionally, key component of the proton channel; it plays a direct role in the translocation of protons across the membrane. In Thiobacillus denitrificans (strain ATCC 25259 / T1), this protein is ATP synthase subunit a.